The primary structure comprises 270 residues: uncharacterized protein (270 aa).

The protein localises to the cytoplasm. This is an uncharacterized protein from Schizosaccharomyces pombe (strain 972 / ATCC 24843) (Fission yeast).